We begin with the raw amino-acid sequence, 565 residues long: Molybdenum cofactor biosynthesis protein 1 (565 aa).

The interval Leu3–Ala367 is molybdenum cofactor biosynthesis protein A. One can recognise a Radical SAM core domain in the interval Ser64–Asp276. Arg73 is a GTP binding site. The [4Fe-4S] cluster site is built by Cys80 and Cys84. Tyr86 contacts S-adenosyl-L-methionine. Position 87 (Cys87) interacts with [4Fe-4S] cluster. Arg123 provides a ligand contact to GTP. Gly127 contacts S-adenosyl-L-methionine. Residue Thr154 participates in GTP binding. Position 178 (Ser178) interacts with S-adenosyl-L-methionine. Lys214 contacts GTP. Position 248 (Met248) interacts with S-adenosyl-L-methionine. Cys311 and Cys314 together coordinate [4Fe-4S] cluster. Arg316–Arg318 provides a ligand contact to GTP. Cys328 serves as a coordination point for [4Fe-4S] cluster. Asp525 functions as the For molybdenum cofactor biosynthesis protein C activity in the catalytic mechanism.

This sequence in the C-terminal section; belongs to the MoaC family. In the N-terminal section; belongs to the radical SAM superfamily. MoaA family. Isoform Mocs1a and isoform Mocs1b probably form a heterooligomer. It depends on [4Fe-4S] cluster as a cofactor.

The catalysed reaction is GTP + AH2 + S-adenosyl-L-methionine = (8S)-3',8-cyclo-7,8-dihydroguanosine 5'-triphosphate + 5'-deoxyadenosine + L-methionine + A + H(+). It carries out the reaction (8S)-3',8-cyclo-7,8-dihydroguanosine 5'-triphosphate = cyclic pyranopterin phosphate + diphosphate. The protein operates within cofactor biosynthesis; molybdopterin biosynthesis. In terms of biological role, isoform Mocs1a and isoform Mocs1b probably form a complex that catalyzes the conversion of 5'-GTP to cyclic pyranopterin monophosphate (cPMP). Mocs1a catalyzes the cyclization of GTP to (8S)-3',8-cyclo-7,8-dihydroguanosine 5'-triphosphate and Mocs1b catalyzes the subsequent conversion of (8S)-3',8-cyclo-7,8-dihydroguanosine 5'-triphosphate to cPMP. This chain is Molybdenum cofactor biosynthesis protein 1 (Mocs1), found in Drosophila melanogaster (Fruit fly).